Reading from the N-terminus, the 266-residue chain is MGLCSDPAITYLKRLGYNVVRLPREGIQPLHLLGQQRGTVEYLGSLEKLITQPPSEPPAITRDQAAAGINGQKTENLSFSIGINILKSVLAQFGAGAGIEAQYNQARKVRFEFSNVLADSVEPLAVGQFLKMAEVDADNPVLKQYVLGNGRLYVITQVIKSNEFTVAAEKSGGGSIQLDVPEIQKVVGGKLKVEASVSSQSTVTYKGEKQLVFGFKCFEIGVKNGEITLFASQPGAIAMALDAAGGVMPSDSALLDEGGLLDLEGF.

The S-palmitoyl cysteine moiety is linked to residue C4. A run of 4 beta stranded transmembrane segments spans residues 69–85 (INGQ…GINI), 97–114 (AGIE…FEFS), 163–180 (EFTV…QLDV), and 189–205 (GKLK…TVTY). The segment at 238 to 266 (AMALDAAGGVMPSDSALLDEGGLLDLEGF) is C-terminal region.

The protein belongs to the bacterial gasdermin family. Monomer in solution. As to quaternary structure, homooligomer; forms homooligomeric ring-shaped pores when inserted in membranes with 48-54 subunits per ring. Post-translationally, palmitoylation helps stabilize the inactive state; may self palmitoylate. Palmitoylation plays a significant role in pore formation.

It localises to the cytoplasm. The protein resides in the cell inner membrane. The full-length protein before cleavage is inactive: intramolecular interactions between the N-terminal domain and the C-terminal region as well as the lipid modification, mediate autoinhibition. The pyroptosis-like-inducing activity is carried by the released N-terminal domain (Gasdermin bGSDM, N-terminus). In terms of biological role, precursor of a pore-forming protein involved in defense against bacteriophages. Expression of bGSDM and the neighboring protease gene (Ga0334635_1659) is toxic in E.coli. Cleavage of this precursor by its dedicated protease releases the active moiety (gasdermin bGSDM, N-terminus) which inserts into membranes, forming pores and triggering cell death. Its function is as follows. Pore-forming protein that causes membrane permeabilization, probably via a pyroptosis-like activity. Makes ring-like pores with an interior pore diameter of 200-300 Angstroms, when integrated in liposomes. In Vitiosangium sp. (strain GDMCC 1.1324), this protein is Gasdermin bGSDM.